We begin with the raw amino-acid sequence, 522 residues long: Putative thymidine phosphorylase (522 aa).

Belongs to the thymidine/pyrimidine-nucleoside phosphorylase family. Type 2 subfamily.

It catalyses the reaction thymidine + phosphate = 2-deoxy-alpha-D-ribose 1-phosphate + thymine. The protein is Putative thymidine phosphorylase of Albidiferax ferrireducens (strain ATCC BAA-621 / DSM 15236 / T118) (Rhodoferax ferrireducens).